We begin with the raw amino-acid sequence, 100 residues long: Small ubiquitin-related modifier 1 (100 aa).

A compositionally biased stretch (basic and acidic residues) spans 1-12 (MSANQEEDKKPG). A disordered region spans residues 1–21 (MSANQEEDKKPGDGGAHINLK). The Ubiquitin-like domain maps to 16-93 (AHINLKVKGQ…IDAMLHQTGG (78 aa)). Gly-93 participates in a covalent cross-link: Glycyl lysine isopeptide (Gly-Lys) (interchain with K-? in acceptor proteins).

Belongs to the ubiquitin family. SUMO subfamily. In terms of assembly, interacts with SAE2, SCE1, SIZ1 and MMS21. Interacts with HSFA2. Covalently attached to ABI5, FLD, GTE3, HSFA2 and ICE1.

Its subcellular location is the nucleus. The protein localises to the cytoplasm. Functionally, ubiquitin-like protein which can be covalently attached to target lysines as a monomer. Does not seem to be involved in protein degradation and may function as an antagonist of ubiquitin in the degradation process. Required for the massive protein sumoylation in the nucleus induced by heat shock and controlled by SIZ1. Involved in the regulation of the heat stress transcription factor HSFA2 in acquired thermotolerance. This Arabidopsis thaliana (Mouse-ear cress) protein is Small ubiquitin-related modifier 1.